We begin with the raw amino-acid sequence, 700 residues long: Elongation factor G 2 (700 aa).

The region spanning 8–290 (ERYRNIGISA…AVLDFLPSPI (283 aa)) is the tr-type G domain. GTP-binding positions include 17 to 24 (AHIDAGKT), 88 to 92 (DTPGH), and 142 to 145 (NKMD).

Belongs to the TRAFAC class translation factor GTPase superfamily. Classic translation factor GTPase family. EF-G/EF-2 subfamily.

It is found in the cytoplasm. Functionally, catalyzes the GTP-dependent ribosomal translocation step during translation elongation. During this step, the ribosome changes from the pre-translocational (PRE) to the post-translocational (POST) state as the newly formed A-site-bound peptidyl-tRNA and P-site-bound deacylated tRNA move to the P and E sites, respectively. Catalyzes the coordinated movement of the two tRNA molecules, the mRNA and conformational changes in the ribosome. In Paraburkholderia xenovorans (strain LB400), this protein is Elongation factor G 2.